Reading from the N-terminus, the 1757-residue chain is 1-phosphatidylinositol-3-phosphate 5-kinase FAB1A (1757 aa).

The FYVE-type zinc finger occupies 36–102 (DQSCPVCYEC…VCNYCYKQWE (67 aa)). Zn(2+) is bound by residues Cys-42, Cys-45, Cys-58, Cys-61, Cys-66, Cys-69, Cys-94, and Cys-97. Disordered stretches follow at residues 125–193 (ARSV…SDNQ), 276–297 (KTRQ…CEES), 313–346 (LPPE…YLRP), and 684–709 (AEKS…NFTS). Polar residues predominate over residues 134 to 145 (NSSNCTIDSTAG). Over residues 317–337 (PENEEDEREAVLSDDDGDEGD) the composition is skewed to acidic residues. Positions 1014-1087 (LQKESKEVIK…LQQMLNVVKD (74 aa)) form a coiled coil. A PIPK domain is found at 1395 to 1719 (SFSLFDSVNL…RFRKAMTAYF (325 aa)). Residues 1729–1739 (AAVVPSNSSSA) show a composition bias toward low complexity. The interval 1729–1757 (AAVVPSNSSSAEVKEEEEKDNPQAVGNKS) is disordered.

Component of the PI(3,5)P2 regulatory complex at least composed of ATG18, SAC/FIG4, FAB1 and VAC14. Mg(2+) is required as a cofactor. It depends on Mn(2+) as a cofactor. Ubiquitous with highest expression levels in pollen, seed, and senescent leaves.

Its subcellular location is the endosome membrane. The enzyme catalyses a 1,2-diacyl-sn-glycero-3-phospho-(1D-myo-inositol-3-phosphate) + ATP = a 1,2-diacyl-sn-glycero-3-phospho-(1D-myo-inositol-3,5-bisphosphate) + ADP + H(+). In terms of biological role, the PI(3,5)P2 regulatory complex regulates both the synthesis and turnover of phosphatidylinositol 3,5-bisphosphate (PtdIns(3,5)P2). Catalyzes the phosphorylation of phosphatidylinositol 3-phosphate on the fifth hydroxyl of the myo-inositol ring, to form phosphatidylinositol 3,5-bisphosphate. Plays an important role in maintenance of endomembrane homeostasis including endocytosis, vacuole formation, and vacuolar acidification processes. Required for development of viable pollen. Might mediate recycling of auxin transporters. The protein is 1-phosphatidylinositol-3-phosphate 5-kinase FAB1A (FAB1A) of Arabidopsis thaliana (Mouse-ear cress).